The following is a 96-amino-acid chain: YcgL domain-containing protein VS_0884 (96 aa).

The region spanning 1–84 (MLCSIYKSSK…PPVNELELHK (84 aa)) is the YcgL domain.

This Vibrio atlanticus (strain LGP32) (Vibrio splendidus (strain Mel32)) protein is YcgL domain-containing protein VS_0884.